The chain runs to 440 residues: 23S rRNA (uracil(1939)-C(5))-methyltransferase RlmD (440 aa).

Residues 10-68 enclose the TRAM domain; the sequence is KALPTQAVEITIDNLDHHLTGVGRYQGKACFVEGVLPGEKVSVQITEQKKQYAHARLRQ. Positions 81, 87, 90, and 169 each coordinate [4Fe-4S] cluster. Gln272, Phe301, Asn306, Glu322, Asp349, and Asp372 together coordinate S-adenosyl-L-methionine. Cys398 acts as the Nucleophile in catalysis.

The protein belongs to the class I-like SAM-binding methyltransferase superfamily. RNA M5U methyltransferase family. RlmD subfamily.

The catalysed reaction is uridine(1939) in 23S rRNA + S-adenosyl-L-methionine = 5-methyluridine(1939) in 23S rRNA + S-adenosyl-L-homocysteine + H(+). Catalyzes the formation of 5-methyl-uridine at position 1939 (m5U1939) in 23S rRNA. The chain is 23S rRNA (uracil(1939)-C(5))-methyltransferase RlmD from Tolumonas auensis (strain DSM 9187 / NBRC 110442 / TA 4).